The chain runs to 200 residues: Recombination protein RecR (200 aa).

The segment at 57-72 adopts a C4-type zinc-finger fold; the sequence is CSQCRTFTEQETCAIC. The region spanning 81-176 is the Toprim domain; the sequence is GLLCVVEMPA…KVSRIAHGIP (96 aa).

It belongs to the RecR family.

Functionally, may play a role in DNA repair. It seems to be involved in an RecBC-independent recombinational process of DNA repair. It may act with RecF and RecO. The polypeptide is Recombination protein RecR (Actinobacillus succinogenes (strain ATCC 55618 / DSM 22257 / CCUG 43843 / 130Z)).